Reading from the N-terminus, the 955-residue chain is Kinesin-like protein KIN-14L (955 aa).

In terms of domain architecture, Calponin-homology (CH) spans 19 to 140 (AARRFQAVQW…CILGLKAYHE (122 aa)). A Kinesin motor domain is found at 363–685 (NIRVYCRVRP…LKFAQRVSTV (323 aa)). 445 to 452 (GQTGSGKT) contributes to the ATP binding site. Residues 692–719 (AHKETREVMHLKEQIENLKRALGTEEWN) are a coiled coil. The tract at residues 878–942 (RKENIPADPR…GKPIENGKKD (65 aa)) is disordered. The segment covering 894 to 916 (NNFSHIKSPDTSNAKTMRRQSLT) has biased composition (polar residues).

Belongs to the TRAFAC class myosin-kinesin ATPase superfamily. Kinesin family. KIN-14 subfamily.

The polypeptide is Kinesin-like protein KIN-14L (Arabidopsis thaliana (Mouse-ear cress)).